Here is a 710-residue protein sequence, read N- to C-terminus: MEQTYQYAWIIPFVPLLVPMLIGAGLLIFPTVTKNLRRMWSFQSVLLLSIVMAFSIYLSIQQINRGSIYQYVWSWIINNDFSLEFGYLIDPLTSIMSILVTTVGILVLIYSDNYMAHDQGYLRFFTYMSFFCAAMLGLVTSSNFIQIYIFWELVGLCSYLLIGFWFTRPGAANACQKAFVTNRVGDFGLLLGILGFYWITGSFEFRELFQILNNLISSKEVNLLFVTLCAALLFVGAIAKSAQFPLHVWLPDAMEGPTPISALIHAATLVAAGIFLVARLLPLFLVIPYIMYFISLIGIITVLLGATLALAQQDIKRGLAYSTMSQLGYMMVALGMGSYRSALFHLITHAYSKALLFLAAGSVIHSMETIIGYSPEKSQNMVIMGGLTKHVPITKGAFLLGTLSLCGIPPLACFWSKDEILNDSWLYSPIFALIAWGTVGLTAFYMFRIYLMTFEGHLNVGFKNYSGKKNNPADSMSLWGKKGSKPINKNFRFFTIDEKGENQTKISYTSDPFESENTMLFPQILLCFVTFVIGFLGIPKELGFNLDILTQWLHPAIYLLHHTNSTDLAEFLKHTVISGGIAYCGIFIAFLLYKPTYSSFKSFLLINSLHQKSLKRVIRDKIVFVIYDWAYNRAYIDTFYKNFFVCQVRRFSQIIRSFDLRIIDQIFNCFAFLSFIASEGIKYLGYARIPFYLFFYFFFVSIFIFLFYKN.

The next 17 helical transmembrane spans lie at 9 to 29 (WIIP…LLIF), 40 to 60 (WSFQ…YLSI), 89 to 109 (IDPL…LVLI), 125 to 145 (FTYM…SNFI), 147 to 167 (IYIF…FWFT), 185 to 205 (GDFG…SFEF), 221 to 241 (VNLL…IAKS), 258 to 278 (TPIS…FLVA), 280 to 300 (LLPL…IGII), 327 to 347 (LGYM…FHLI), 354 to 374 (ALLF…IGYS), 396 to 416 (GAFL…CFWS), 425 to 445 (WLYS…TAFY), 519 to 539 (MLFP…LGIP), 571 to 591 (FLKH…IAFL), 657 to 676 (SFDL…LSFI), and 689 to 709 (IPFY…LFYK).

The protein belongs to the complex I subunit 5 family. NDH is composed of at least 16 different subunits, 5 of which are encoded in the nucleus.

The protein localises to the plastid. It localises to the chloroplast thylakoid membrane. The enzyme catalyses a plastoquinone + NADH + (n+1) H(+)(in) = a plastoquinol + NAD(+) + n H(+)(out). It catalyses the reaction a plastoquinone + NADPH + (n+1) H(+)(in) = a plastoquinol + NADP(+) + n H(+)(out). NDH shuttles electrons from NAD(P)H:plastoquinone, via FMN and iron-sulfur (Fe-S) centers, to quinones in the photosynthetic chain and possibly in a chloroplast respiratory chain. The immediate electron acceptor for the enzyme in this species is believed to be plastoquinone. Couples the redox reaction to proton translocation, and thus conserves the redox energy in a proton gradient. The protein is NAD(P)H-quinone oxidoreductase subunit 5, chloroplastic (ndhF) of Ipomoea purpurea (Common morning glory).